A 149-amino-acid polypeptide reads, in one-letter code: Transcriptional repressor NrdR (149 aa).

A zinc finger spans residues 3–34 (CPFCSATDTKVIDSRLVADGHQVRRRRECTLC). One can recognise an ATP-cone domain in the interval 49-139 (PRVIKRDDTR…VYRAFEDVSQ (91 aa)).

It belongs to the NrdR family. It depends on Zn(2+) as a cofactor.

Functionally, negatively regulates transcription of bacterial ribonucleotide reductase nrd genes and operons by binding to NrdR-boxes. This is Transcriptional repressor NrdR from Shewanella denitrificans (strain OS217 / ATCC BAA-1090 / DSM 15013).